The sequence spans 296 residues: tRNA uridine(34) hydroxylase (296 aa).

Residues 130–225 (RGEDVVFFDG…YGEAYGDRGL (96 aa)) form the Rhodanese domain. Cys185 functions as the Cysteine persulfide intermediate in the catalytic mechanism.

The protein belongs to the TrhO family.

The enzyme catalyses uridine(34) in tRNA + AH2 + O2 = 5-hydroxyuridine(34) in tRNA + A + H2O. Catalyzes oxygen-dependent 5-hydroxyuridine (ho5U) modification at position 34 in tRNAs. This chain is tRNA uridine(34) hydroxylase, found in Kocuria rhizophila (strain ATCC 9341 / DSM 348 / NBRC 103217 / DC2201).